An 89-amino-acid polypeptide reads, in one-letter code: Small ribosomal subunit protein uS15 (89 aa).

This sequence belongs to the universal ribosomal protein uS15 family. As to quaternary structure, part of the 30S ribosomal subunit. Forms a bridge to the 50S subunit in the 70S ribosome, contacting the 23S rRNA.

In terms of biological role, one of the primary rRNA binding proteins, it binds directly to 16S rRNA where it helps nucleate assembly of the platform of the 30S subunit by binding and bridging several RNA helices of the 16S rRNA. Functionally, forms an intersubunit bridge (bridge B4) with the 23S rRNA of the 50S subunit in the ribosome. The protein is Small ribosomal subunit protein uS15 of Bordetella parapertussis (strain 12822 / ATCC BAA-587 / NCTC 13253).